Consider the following 414-residue polypeptide: Secernin-1 (414 aa).

It belongs to the peptidase C69 family. Secernin subfamily.

The protein localises to the cytoplasm. Its function is as follows. Regulates exocytosis in mast cells. Increases both the extent of secretion and the sensitivity of mast cells to stimulation with calcium. This is Secernin-1 (Scrn1) from Mus musculus (Mouse).